The following is a 483-amino-acid chain: Protein nucleotidyltransferase YdiU (483 aa).

ATP is bound by residues Gly87, Gly89, Arg90, Lys110, Asp122, Gly123, Arg173, and Arg180. The active-site Proton acceptor is the Asp249. 2 residues coordinate Mg(2+): Asn250 and Asp259. Asp259 contacts ATP.

This sequence belongs to the SELO family. Mg(2+) serves as cofactor. The cofactor is Mn(2+).

The catalysed reaction is L-seryl-[protein] + ATP = 3-O-(5'-adenylyl)-L-seryl-[protein] + diphosphate. It catalyses the reaction L-threonyl-[protein] + ATP = 3-O-(5'-adenylyl)-L-threonyl-[protein] + diphosphate. It carries out the reaction L-tyrosyl-[protein] + ATP = O-(5'-adenylyl)-L-tyrosyl-[protein] + diphosphate. The enzyme catalyses L-histidyl-[protein] + UTP = N(tele)-(5'-uridylyl)-L-histidyl-[protein] + diphosphate. The catalysed reaction is L-seryl-[protein] + UTP = O-(5'-uridylyl)-L-seryl-[protein] + diphosphate. It catalyses the reaction L-tyrosyl-[protein] + UTP = O-(5'-uridylyl)-L-tyrosyl-[protein] + diphosphate. Functionally, nucleotidyltransferase involved in the post-translational modification of proteins. It can catalyze the addition of adenosine monophosphate (AMP) or uridine monophosphate (UMP) to a protein, resulting in modifications known as AMPylation and UMPylation. The polypeptide is Protein nucleotidyltransferase YdiU (Pectobacterium atrosepticum (strain SCRI 1043 / ATCC BAA-672) (Erwinia carotovora subsp. atroseptica)).